The chain runs to 415 residues: Cell wall mannoprotein PIR3 (415 aa).

The signal sequence occupies residues 1-18; that stretch reads MQYKKPLVVSALAATSLA. Residues 19 to 67 constitute a propeptide that is removed on maturation; the sequence is AYAPKDPWSTLTPSATYKGGITDYSSSFGIAIEAVATSASSVASSKAKR. PIR1/2/3 repeat units follow at residues 66 to 84, 92 to 109, 110 to 127, 128 to 145, 146 to 163, 164 to 181, 182 to 199, 200 to 217, 218 to 235, 236 to 253, 254 to 271, 272 to 288, and 289 to 307; these read KRAA…TTTA, AAAV…AKST, AAAA…AKST, AAAA…TTST, KAAA…ASKT, and TSGA…AEVK.

This sequence belongs to the PIR protein family. In terms of processing, covalently linked to beta-1,3-glucan of the inner cell wall layer via an alkali-sensitive ester linkage between the gamma-carboxyl group of glutamic acids, arising from specific glutamines within the PIR1/2/3 repeats, and hydroxyl groups of glucoses of beta-1,3-glucan chains. O-glycosylated. Extensively O-mannosylated.

It is found in the secreted. Its subcellular location is the cell wall. Component of the outer cell wall layer. Required for stability of the cell wall and for optimal growth. Required for resistance against several antifungal and cell wall-perturbing agents. This is Cell wall mannoprotein PIR3 (PIR3) from Saccharomyces cerevisiae (strain YJM789) (Baker's yeast).